Consider the following 304-residue polypeptide: Germ cell-specific gene 1-like protein (304 aa).

The Cytoplasmic segment spans residues 1-8 (MKTTRKCR). Residues 9 to 29 (ALLSVGLNLLALLFSTTAFIT) form a helical membrane-spanning segment. The Extracellular portion of the chain corresponds to 30–112 (TYWCEGTQRV…FIDLAPASER (83 aa)). The helical transmembrane segment at 113–133 (GVLWLSVVSEVLYIMLLVVGF) threads the bilayer. Over 134 to 153 (SLMCLELFHSSNVIDGLKLN) the chain is Cytoplasmic. A helical membrane pass occupies residues 154–174 (AFAAVFTVLSGLLGMVAHMMY). Over 175-197 (TQVFQITVSLGPEDWRPHTWDYG) the chain is Extracellular. Residues 198 to 218 (WSFCMAWGSFTCCMAASVTTL) form a helical membrane-spanning segment. Over 219–304 (NSYTKTVIEF…NTESLGEEQC (86 aa)) the chain is Cytoplasmic. Residues 266 to 278 (VDVYPSHGSSHGN) are compositionally biased toward polar residues. The disordered stretch occupies residues 266–304 (VDVYPSHGSSHGNSRGKMRSPPAPVDQGDNTESLGEEQC).

It belongs to the GSG1 family. In terms of assembly, component of the AMPAR complex.

It localises to the cell membrane. Its subcellular location is the synapse. In terms of biological role, as a component of the AMPAR complex, modifies AMPA receptor (AMPAR) gating. This chain is Germ cell-specific gene 1-like protein (gsg1l), found in Danio rerio (Zebrafish).